The sequence spans 552 residues: Low-affinity Fe(2+) transport protein (552 aa).

The Extracellular portion of the chain corresponds to 1–97 (MGKIAEFLGN…DFLVRVAGSQ (97 aa)). A Glycyl lysine isopeptide (Lys-Gly) (interchain with G-Cter in ubiquitin) cross-link involves residue Lys-39. Ser-48 and Ser-50 each carry phosphoserine. The chain crosses the membrane as a helical span at residues 98–118 (AVFFIVWIILIIWVVIGIVYN). Residues 119–225 (APFNWQVVMQ…SNVASRYMGS (107 aa)) lie on the Cytoplasmic side of the membrane. A helical transmembrane segment spans residues 226 to 246 (IAAMVIFWIGIFVWIGCGAIP). Over 247 to 271 (KDAGNTPPYTGETTGSNPRLKKFSD) the chain is Extracellular. A helical membrane pass occupies residues 272–292 (AWQMYINTAVAVSLLICTTFL). The Cytoplasmic segment spans residues 293 to 354 (QNIRARHDYF…GRKMIDWYAD (62 aa)). Residues 355–375 (IIGTGIGVLIGVAVFATWIGI) form a helical membrane-spanning segment. Residues 376-383 (GSPMKWDD) are Extracellular-facing. Residues 384 to 404 (NWWLIIGTYTGLIGFLDGFVL) traverse the membrane as a helical segment. The Cytoplasmic portion of the chain corresponds to 405-465 (REVYFRIVQH…SQYINRICST (61 aa)). Residues 466-486 (PWSVLVSVIIIIGLICIASGL) traverse the membrane as a helical segment. Topologically, residues 487 to 493 (RWSTTGQ) are extracellular. A helical transmembrane segment spans residues 494–514 (LIANTPTMIIEEFFLLVLLQA). At 515–552 (HNWADRQRRVEVTALYARRRILLSYVEKRFPEVMMLEK) the chain is on the cytoplasmic side.

It belongs to the FET4 family.

The protein resides in the membrane. Required for Fe(2+) ion low affinity uptake. This Saccharomyces cerevisiae (strain ATCC 204508 / S288c) (Baker's yeast) protein is Low-affinity Fe(2+) transport protein (FET4).